The primary structure comprises 127 residues: NADPH-dependent 7-cyano-7-deazaguanine reductase (127 aa).

Catalysis depends on C40, which acts as the Thioimide intermediate. D47 functions as the Proton donor in the catalytic mechanism. Residues 62-64 and 81-82 contribute to the substrate site; these read VEL and HE.

It belongs to the GTP cyclohydrolase I family. QueF type 1 subfamily.

The protein localises to the cytoplasm. The enzyme catalyses 7-aminomethyl-7-carbaguanine + 2 NADP(+) = 7-cyano-7-deazaguanine + 2 NADPH + 3 H(+). It participates in tRNA modification; tRNA-queuosine biosynthesis. Catalyzes the NADPH-dependent reduction of 7-cyano-7-deazaguanine (preQ0) to 7-aminomethyl-7-deazaguanine (preQ1). In Campylobacter jejuni (strain RM1221), this protein is NADPH-dependent 7-cyano-7-deazaguanine reductase.